We begin with the raw amino-acid sequence, 768 residues long: Post-transcriptional regulator MKT1 (768 aa).

Belongs to the XPG/RAD2 endonuclease family. In terms of assembly, interacts with PBP1.

Its subcellular location is the cytoplasm. The protein localises to the cytosol. Involved in 3'-UTR mediated RNA regulation. Complexes with PBP1 to promote mRNA interactions with poly(A)-binding protein. This chain is Post-transcriptional regulator MKT1, found in Cryptococcus neoformans var. grubii serotype A (strain H99 / ATCC 208821 / CBS 10515 / FGSC 9487) (Filobasidiella neoformans var. grubii).